Consider the following 693-residue polypeptide: Translation factor GUF1 homolog, mitochondrial (693 aa).

Residues Ser51–Thr63 show a composition bias toward polar residues. The tract at residues Ser51–Lys78 is disordered. One can recognise a tr-type G domain in the interval Gln88–Pro270. GTP contacts are provided by residues Ala97 to Ser104, Asp163 to His167, and Asn217 to Asp220.

It belongs to the TRAFAC class translation factor GTPase superfamily. Classic translation factor GTPase family. LepA subfamily.

The protein resides in the mitochondrion inner membrane. It carries out the reaction GTP + H2O = GDP + phosphate + H(+). In terms of biological role, promotes mitochondrial protein synthesis. May act as a fidelity factor of the translation reaction, by catalyzing a one-codon backward translocation of tRNAs on improperly translocated ribosomes. Binds to mitochondrial ribosomes in a GTP-dependent manner. In Phaeodactylum tricornutum (strain CCAP 1055/1), this protein is Translation factor GUF1 homolog, mitochondrial.